The primary structure comprises 218 residues: Small ribosomal subunit protein uS3 (218 aa).

In terms of domain architecture, KH type-2 spans 38 to 106; that stretch reads IREYLTKRLS…RVHINIVEIK (69 aa).

Belongs to the universal ribosomal protein uS3 family. As to quaternary structure, part of the 30S ribosomal subunit. Forms a tight complex with proteins S10 and S14.

Binds the lower part of the 30S subunit head. Binds mRNA in the 70S ribosome, positioning it for translation. The protein is Small ribosomal subunit protein uS3 of Anoxybacillus flavithermus (strain DSM 21510 / WK1).